The sequence spans 1013 residues: Polyprotein of EF-Ts, chloroplastic (1013 aa).

Residues 1 to 43 constitute a chloroplast transit peptide; the sequence is MLRELGRTATVKAHGRSVLRPVRGPAGRRQVAFTGVRPSVRVF. The S1 motif 1 domain maps to 64–133; that stretch reads GSEYEGTVTT…EKKRVSLELK (70 aa). Acidic residues predominate over residues 141-150; it reads SAEESDDIIT. Residues 141–163 form a disordered region; the sequence is SAEESDDIITEPDREGADATDDD. The region spanning 227-331 is the S1 motif 2 domain; the sequence is MEEVTGKVAR…DGRGISLTHF (105 aa). The disordered stretch occupies residues 772–798; it reads QAKAAAPAAPKKEEPKKEEPKKATVAV. Residues 781-793 show a composition bias toward basic and acidic residues; that stretch reads PKKEEPKKEEPKK.

The protein belongs to the EF-Ts family. Component of the chloroplast ribosome 30S and 70S subunits, as well as polysomes. As to quaternary structure, component of the chloroplast ribosome 70S subunit, and at low levels, present in polysomes. In terms of assembly, associates transiently with chloroplast polysomes.

It localises to the plastid. Its subcellular location is the chloroplast. Associates with the EF-Tu.GDP complex and induces the exchange of GDP to GTP. It remains bound to the aminoacyl-tRNA.EF-Tu.GTP complex up to the GTP hydrolysis stage on the ribosome. In terms of biological role, binds to psbD and psbA mRNAs 5'-untranslated regions (UTRs) in vitro. This chain is Polyprotein of EF-Ts, chloroplastic, found in Chlamydomonas reinhardtii (Chlamydomonas smithii).